Consider the following 722-residue polypeptide: Polyribonucleotide nucleotidyltransferase (722 aa).

Residues Asp-486 and Asp-492 each coordinate Mg(2+). The 60-residue stretch at 553 to 612 (PRITTIQIRPEFIKNVIGPGGKVIKDIIARTGAAINIEDSGRVDIASANGEAVKAAIAMI) folds into the KH domain. The S1 motif domain occupies 622–690 (GKIYTGTVRK…KTGKIRLSRK (69 aa)). The segment at 696 to 722 (RAAQQGAAAGEAAAQPAPAPTQPDAKA) is disordered.

Belongs to the polyribonucleotide nucleotidyltransferase family. Mg(2+) serves as cofactor.

It is found in the cytoplasm. The catalysed reaction is RNA(n+1) + phosphate = RNA(n) + a ribonucleoside 5'-diphosphate. Involved in mRNA degradation. Catalyzes the phosphorolysis of single-stranded polyribonucleotides processively in the 3'- to 5'-direction. In Myxococcus xanthus (strain DK1622), this protein is Polyribonucleotide nucleotidyltransferase.